A 379-amino-acid chain; its full sequence is Chaperone protein DnaJ (379 aa).

One can recognise a J domain in the interval 5 to 69; sequence DYYEVLGISK…NKRATIDQFG (65 aa). The segment at 136-218 adopts a CR-type zinc-finger fold; that stretch reads GTTKEISIRK…CHGKGTENKT (83 aa). Residues cysteine 149, cysteine 152, cysteine 166, cysteine 169, cysteine 192, cysteine 195, cysteine 206, and cysteine 209 each coordinate Zn(2+). 4 CXXCXGXG motif repeats span residues 149 to 156, 166 to 173, 192 to 199, and 206 to 213; these read CETCHGDG, CSYCNGAG, CPKCNGSG, and CPTCHGKG.

It belongs to the DnaJ family. As to quaternary structure, homodimer. Requires Zn(2+) as cofactor.

It localises to the cytoplasm. In terms of biological role, participates actively in the response to hyperosmotic and heat shock by preventing the aggregation of stress-denatured proteins and by disaggregating proteins, also in an autonomous, DnaK-independent fashion. Unfolded proteins bind initially to DnaJ; upon interaction with the DnaJ-bound protein, DnaK hydrolyzes its bound ATP, resulting in the formation of a stable complex. GrpE releases ADP from DnaK; ATP binding to DnaK triggers the release of the substrate protein, thus completing the reaction cycle. Several rounds of ATP-dependent interactions between DnaJ, DnaK and GrpE are required for fully efficient folding. Also involved, together with DnaK and GrpE, in the DNA replication of plasmids through activation of initiation proteins. The chain is Chaperone protein DnaJ from Staphylococcus aureus.